The primary structure comprises 342 residues: Autoinducer 2 import system permease protein LsrC (342 aa).

Over 1-13 (MLKFIQNNREITA) the chain is Periplasmic. A helical membrane pass occupies residues 14–34 (LLAVVLLFVLPGFLDRQYLSV). At 35 to 38 (QTLT) the chain is on the cytoplasmic side. The chain crosses the membrane as a helical span at residues 39-59 (MVYSSAQILILLAMGATLVML). The Periplasmic segment spans residues 60–69 (TRNIDVSVGS). A helical membrane pass occupies residues 70–90 (ITGMCAVLLGMLLNAGYSLPV). The Cytoplasmic portion of the chain corresponds to 91–92 (AC). Residues 93 to 113 (VATLLLGLLAGFFNGALVAWL) form a helical membrane-spanning segment. A topological domain (periplasmic) is located at residue Lys-114. A helical transmembrane segment spans residues 115 to 135 (IPAIVATLGTLGLYRGIMLLW). The Cytoplasmic portion of the chain corresponds to 136–154 (TGGKWIEGLPAELKQLSAP). The chain crosses the membrane as a helical span at residues 155–175 (LLLGISAIGWLTIILVAFMAW). The Periplasmic segment spans residues 176–212 (LLAKTAFGRSFYATGDNLQGARQLGVRTEAIRIVAFS). Residues 213–233 (LNGCMAALAGIVFASQIGFIL) form a helical membrane-spanning segment. Residues 234–251 (NQTGTGLEMKAIAACVLG) are Cytoplasmic-facing. A helical membrane pass occupies residues 252 to 272 (GISLLGGSGAIIGAVLGAWFL). The Periplasmic segment spans residues 273–283 (TQIDSVLVLLR). Residues 284 to 304 (IPAWWNDFIAGLVLLAVLVFD) form a helical membrane-spanning segment. Over 305–342 (GRLRCALERNLRRQKYARFMTPPPSVKPASSGKKREAA) the chain is Cytoplasmic.

It belongs to the binding-protein-dependent transport system permease family. AraH/RbsC subfamily. As to quaternary structure, the complex is composed of two ATP-binding proteins (LsrA), two transmembrane proteins (LsrC and LsrD) and a solute-binding protein (LsrB).

It is found in the cell inner membrane. Its function is as follows. Part of the ABC transporter complex LsrABCD involved in autoinducer 2 (AI-2) import. Probably responsible for the translocation of the substrate across the membrane. This chain is Autoinducer 2 import system permease protein LsrC (lsrC), found in Shigella flexneri.